The sequence spans 562 residues: MVASGFLLIASFMLVLFVLSRPLGGFLARLIEGEPFSALQKVEAGLWRCSGVKNAEMNGWQYALAILCFNLLGIVLLFVLLMTQGSLPLNPEHLPGMSWHLALNTAVSFVTNTNWQAYSGENTLSYLSQMAGLTVQNFLSAATGIAVAFALIRAFARHSATTLGNAWVDLVRITLYVLLPIALIIALIFVSQGVLQNLDGYLHITTLEGVQQTLPMGPVASQEAIKVLGTNGGGFFGANSAHPFENPTAFSNFVQMLAIFLIPCALCFAFGQVVGDNRQGHALIWAMSLIFIVAVVVVMYAELAGNPHLSPLGADSNSNMEGKESRFGILATSLYAVVTTAASCGAVNAMHDSFTALGGMIPLWLMQIGEVVFGGVGSGLYGMLLFVLLTVFIAGLMIGRTPEYLGKKIDVFDMKMTALAILVTPTIVLLGTALALCTEAGRAGILNPGAHGFSEVLYALSSAANNNGSAFAGLSVNTPFYNLLLAAAMFIGRFGVILPVLAIASSLVAKKRQPAGNGTLPTGGPLFIGLLIGTVLLVGALTFIPALALGPVAEHLQVWLAH.

Transmembrane regions (helical) follow at residues 6–26 (FLLIASFMLVLFVLSRPLGGF), 62–82 (YALAILCFNLLGIVLLFVLLM), 132–152 (GLTVQNFLSAATGIAVAFALI), 175–195 (LYVLLPIALIIALIFVSQGVL), 253–273 (FVQMLAIFLIPCALCFAFGQV), 283–303 (LIWAMSLIFIVAVVVVMYAEL), 327–347 (FGILATSLYAVVTTAASCGAV), 356–376 (ALGGMIPLWLMQIGEVVFGGV), 379–399 (GLYGMLLFVLLTVFIAGLMIG), 416–436 (MTALAILVTPTIVLLGTALAL), 483–503 (LLLAAAMFIGRFGVILPVLAI), and 526–546 (LFIGLLIGTVLLVGALTFIPA).

It belongs to the KdpA family. The system is composed of three essential subunits: KdpA, KdpB and KdpC.

The protein resides in the cell inner membrane. Functionally, part of the high-affinity ATP-driven potassium transport (or Kdp) system, which catalyzes the hydrolysis of ATP coupled with the electrogenic transport of potassium into the cytoplasm. This subunit binds the periplasmic potassium ions and delivers the ions to the membrane domain of KdpB through an intramembrane tunnel. This is Potassium-transporting ATPase potassium-binding subunit from Yersinia pseudotuberculosis serotype I (strain IP32953).